A 180-amino-acid polypeptide reads, in one-letter code: Nucleoside-triphosphatase THEP1 (180 aa).

ATP is bound by residues Gly18–Thr25 and Leu104–Gly111.

It belongs to the THEP1 NTPase family.

The catalysed reaction is a ribonucleoside 5'-triphosphate + H2O = a ribonucleoside 5'-diphosphate + phosphate + H(+). Functionally, has nucleotide phosphatase activity towards ATP, GTP, CTP, TTP and UTP. May hydrolyze nucleoside diphosphates with lower efficiency. This is Nucleoside-triphosphatase THEP1 from Metallosphaera sedula (strain ATCC 51363 / DSM 5348 / JCM 9185 / NBRC 15509 / TH2).